Here is a 368-residue protein sequence, read N- to C-terminus: MLVPPDMMAAQTRMVYQMNRFCTERVQARMYKTATAIREICKIVQDILKEVELQEPRFISSLVECNGRFEGVEVISPNEFEIVLYLNQMGVFNFVDDGTLPGCAVLKLSDGRKRSMSLWVEFITASGYLSSRKIRARFQTLVAQACDKSVYRDMVKMVGDTSEVKLRIRERFVVQITPAFKCSGIWPRSAAHWPVPHLPWPHPNIVAEVKTEGFDLLSKESVIMQNKNNNAASMEGDAWVLSFFEAENRLLQGGCRRRCLSMLKTLRDRHLDLPGNPISAYHLKNLLLYECEKHPRDFEWDEGCIADRINGIFLQLISCLQYRRCPHYFLPALDMFKGKSPSALEQAAKQVWRLTRELLTNANAFEKL.

Belongs to the mab-21 family.

The protein is Protein mab-21-like of Drosophila melanogaster (Fruit fly).